We begin with the raw amino-acid sequence, 353 residues long: Photosystem II protein D1 (353 aa).

An N-acetylthreonine modification is found at Thr2. Thr2 is modified (phosphothreonine). Transmembrane regions (helical) follow at residues 29 to 46 (YIGW…TATS), 118 to 133 (HFFI…EWEL), and 142 to 156 (WIAV…AATA). His118 is a chlorophyll a binding site. Position 126 (Tyr126) interacts with pheophytin a. Asp170 and Glu189 together coordinate [CaMn4O5] cluster. The chain crosses the membrane as a helical span at residues 197–218 (FHMLGVAGVFGGSLFSAMHGSL). His198 lines the chlorophyll a pocket. Residues His215 and 264-265 (SF) contribute to the a quinone site. His215 contributes to the Fe cation binding site. Fe cation is bound at residue His272. Residues 274–288 (FLAIWPVVGIWFTAL) form a helical membrane-spanning segment. [CaMn4O5] cluster is bound by residues His332, Glu333, Asp342, and Ala344. A propeptide spanning residues 345–353 (SVEAPSING) is cleaved from the precursor.

Belongs to the reaction center PufL/M/PsbA/D family. As to quaternary structure, PSII is composed of 1 copy each of membrane proteins PsbA, PsbB, PsbC, PsbD, PsbE, PsbF, PsbH, PsbI, PsbJ, PsbK, PsbL, PsbM, PsbT, PsbX, PsbY, PsbZ, Psb30/Ycf12, at least 3 peripheral proteins of the oxygen-evolving complex and a large number of cofactors. It forms dimeric complexes. The cofactor is The D1/D2 heterodimer binds P680, chlorophylls that are the primary electron donor of PSII, and subsequent electron acceptors. It shares a non-heme iron and each subunit binds pheophytin, quinone, additional chlorophylls, carotenoids and lipids. D1 provides most of the ligands for the Mn4-Ca-O5 cluster of the oxygen-evolving complex (OEC). There is also a Cl(-1) ion associated with D1 and D2, which is required for oxygen evolution. The PSII complex binds additional chlorophylls, carotenoids and specific lipids.. Tyr-161 forms a radical intermediate that is referred to as redox-active TyrZ, YZ or Y-Z. Post-translationally, C-terminally processed by CTPA; processing is essential to allow assembly of the oxygen-evolving complex and thus photosynthetic growth.

The protein localises to the plastid. Its subcellular location is the chloroplast thylakoid membrane. The catalysed reaction is 2 a plastoquinone + 4 hnu + 2 H2O = 2 a plastoquinol + O2. In terms of biological role, photosystem II (PSII) is a light-driven water:plastoquinone oxidoreductase that uses light energy to abstract electrons from H(2)O, generating O(2) and a proton gradient subsequently used for ATP formation. It consists of a core antenna complex that captures photons, and an electron transfer chain that converts photonic excitation into a charge separation. The D1/D2 (PsbA/PsbD) reaction center heterodimer binds P680, the primary electron donor of PSII as well as several subsequent electron acceptors. The polypeptide is Photosystem II protein D1 (Stigeoclonium helveticum (Green alga)).